Here is a 168-residue protein sequence, read N- to C-terminus: Small ribosomal subunit protein uS5 (168 aa).

An S5 DRBM domain is found at 13-76 (LQEKLIAVNR…EKARRNMVTV (64 aa)).

It belongs to the universal ribosomal protein uS5 family. Part of the 30S ribosomal subunit. Contacts proteins S4 and S8.

In terms of biological role, with S4 and S12 plays an important role in translational accuracy. Its function is as follows. Located at the back of the 30S subunit body where it stabilizes the conformation of the head with respect to the body. In Shewanella amazonensis (strain ATCC BAA-1098 / SB2B), this protein is Small ribosomal subunit protein uS5.